The sequence spans 78 residues: Acyl carrier protein (78 aa).

A Carrier domain is found at 1-77 (MSEVEKKVID…DAIDYIEKNL (77 aa)). Serine 37 carries the O-(pantetheine 4'-phosphoryl)serine modification.

It belongs to the acyl carrier protein (ACP) family. 4'-phosphopantetheine is transferred from CoA to a specific serine of apo-ACP by AcpS. This modification is essential for activity because fatty acids are bound in thioester linkage to the sulfhydryl of the prosthetic group.

It is found in the cytoplasm. The protein operates within lipid metabolism; fatty acid biosynthesis. In terms of biological role, carrier of the growing fatty acid chain in fatty acid biosynthesis. The chain is Acyl carrier protein from Porphyromonas gingivalis (strain ATCC 33277 / DSM 20709 / CIP 103683 / JCM 12257 / NCTC 11834 / 2561).